Reading from the N-terminus, the 1051-residue chain is Ubiquitin carboxyl-terminal hydrolase 28 (1051 aa).

The interval 60 to 82 (DQRVKEPSHDTTAAEPSEVEESA) is disordered. Residue Ser67 is modified to Phosphoserine. In terms of domain architecture, UIM spans 97 to 116 (DNKDDLQAAIALSLLESPNI). Lys99 participates in a covalent cross-link: Glycyl lysine isopeptide (Lys-Gly) (interchain with G-Cter in SUMO2). A compositionally biased stretch (basic and acidic residues) spans 121-135 (RDLNRAHEANSAETK). Positions 121–140 (RDLNRAHEANSAETKRSKRK) are disordered. One can recognise a USP domain in the interval 162–655 (VGLKNVGNTC…SAYCLMYIND (494 aa)). Cys171 (nucleophile) is an active-site residue. Ser376 is subject to Phosphoserine. Residues 483–538 (DLTPKESSSPESCSQNAGSTFSSPEDALPSSEGMNGPFTSPHSSLETPAPPAPRTV) are disordered. 2 stretches are compositionally biased toward polar residues: residues 487–505 (KESS…TFSS) and 519–528 (PFTSPHSSLE). Residue Ser555 is modified to Phosphoserine. His605 acts as the Proton acceptor in catalysis. The segment at 703–735 (EEQSCKIPQMESSPNSSSQDFSTSQESPAVSSH) is disordered. The span at 713 to 730 (ESSPNSSSQDFSTSQESP) shows a compositional bias: low complexity. Position 720 is a phosphoserine (Ser720). Thr1022 bears the Phosphothreonine mark.

Belongs to the peptidase C19 family. USP28 subfamily. As to quaternary structure, interacts with ZNF304. Interacts with PRKD1. Interacts with TP53BP1. Interacts with FBXW7; following DNA damage, dissociates from FBXW7 leading to degradation of MYC. Degraded upon nickel ion level or hypoxia exposure. Post-translationally, phosphorylated upon DNA damage at Ser-67 and Ser-720, by ATM or ATR. Phosphorylated by PRKD1.

Its subcellular location is the nucleus. The protein localises to the nucleoplasm. It catalyses the reaction Thiol-dependent hydrolysis of ester, thioester, amide, peptide and isopeptide bonds formed by the C-terminal Gly of ubiquitin (a 76-residue protein attached to proteins as an intracellular targeting signal).. Its function is as follows. Deubiquitinase involved in DNA damage response checkpoint and MYC proto-oncogene stability. Involved in DNA damage induced apoptosis by specifically deubiquitinating proteins of the DNA damage pathway such as CLSPN. Also involved in G2 DNA damage checkpoint, by deubiquitinating CLSPN, and preventing its degradation by the anaphase promoting complex/cyclosome (APC/C). In contrast, it does not deubiquitinate PLK1. Specifically deubiquitinates MYC in the nucleoplasm, leading to prevent MYC degradation by the proteasome: acts by specifically interacting with FBXW7 (FBW7alpha) in the nucleoplasm and counteracting ubiquitination of MYC by the SCF(FBXW7) complex. Deubiquitinates ZNF304, hence preventing ZNF304 degradation by the proteasome and leading to the activated KRAS-mediated promoter hypermethylation and transcriptional silencing of tumor suppressor genes (TSGs) in a subset of colorectal cancers (CRC) cells. The chain is Ubiquitin carboxyl-terminal hydrolase 28 (Usp28) from Mus musculus (Mouse).